Here is a 489-residue protein sequence, read N- to C-terminus: Ribulose bisphosphate carboxylase large chain (489 aa).

Residues Asn-128 and Thr-178 each coordinate substrate. Lys-180 serves as the catalytic Proton acceptor. Lys-182 contacts substrate. Lys-206, Asp-208, and Glu-209 together coordinate Mg(2+). Lys-206 carries the post-translational modification N6-carboxylysine. His-298 (proton acceptor) is an active-site residue. Arg-299, His-331, and Ser-383 together coordinate substrate.

This sequence belongs to the RuBisCO large chain family. Type I subfamily. Heterohexadecamer of 8 large chains and 8 small chains. Mg(2+) is required as a cofactor.

The catalysed reaction is 2 (2R)-3-phosphoglycerate + 2 H(+) = D-ribulose 1,5-bisphosphate + CO2 + H2O. The enzyme catalyses D-ribulose 1,5-bisphosphate + O2 = 2-phosphoglycolate + (2R)-3-phosphoglycerate + 2 H(+). In terms of biological role, ruBisCO catalyzes two reactions: the carboxylation of D-ribulose 1,5-bisphosphate, the primary event in carbon dioxide fixation, as well as the oxidative fragmentation of the pentose substrate. Both reactions occur simultaneously and in competition at the same active site. The protein is Ribulose bisphosphate carboxylase large chain of Nitrosospira multiformis (strain ATCC 25196 / NCIMB 11849 / C 71).